We begin with the raw amino-acid sequence, 347 residues long: Tyrosine recombinase XerC 2 (347 aa).

The 92-residue stretch at 17–108 folds into the Core-binding (CB) domain; the sequence is LVLTRYMEAH…PLKTWFKWLA (92 aa). One can recognise a Tyr recombinase domain in the interval 125 to 313; that stretch reads KLPKHLPRAI…SIEHLRAIHD (189 aa). Active-site residues include Arg170, Lys195, His265, Arg268, and His291. Catalysis depends on Tyr300, which acts as the O-(3'-phospho-DNA)-tyrosine intermediate.

This sequence belongs to the 'phage' integrase family.

The protein localises to the cytoplasm. Its function is as follows. Site-specific tyrosine recombinase, which acts by catalyzing the cutting and rejoining of the recombining DNA molecules. The chain is Tyrosine recombinase XerC 2 from Ralstonia nicotianae (strain ATCC BAA-1114 / GMI1000) (Ralstonia solanacearum).